We begin with the raw amino-acid sequence, 212 residues long: 3-isopropylmalate dehydratase small subunit (212 aa).

The protein belongs to the LeuD family. LeuD type 1 subfamily. As to quaternary structure, heterodimer of LeuC and LeuD.

The enzyme catalyses (2R,3S)-3-isopropylmalate = (2S)-2-isopropylmalate. It participates in amino-acid biosynthesis; L-leucine biosynthesis; L-leucine from 3-methyl-2-oxobutanoate: step 2/4. In terms of biological role, catalyzes the isomerization between 2-isopropylmalate and 3-isopropylmalate, via the formation of 2-isopropylmaleate. In Thiobacillus denitrificans (strain ATCC 25259 / T1), this protein is 3-isopropylmalate dehydratase small subunit.